Reading from the N-terminus, the 479-residue chain is NADH oxidase (479 aa).

Residues 8–12 (GVNHA), Asp-33, Cys-43, Val-80, 111–114 (ASGA), Lys-149, and Tyr-177 each bind FAD. The Proton acceptor role is filled by His-11. The Redox-active role is filled by Cys-43. At Cys-43 the chain carries Cysteine sulfinic acid (-SO2H). Residues 170 to 185 (VAIV…LAEA), Asp-197, and Gly-264 each bind NAD(+). FAD contacts are provided by residues 295 to 305 (LNHENVYVIGG), Leu-322, Ala-323, and Thr-324. Ala-353 serves as a coordination point for NAD(+). Phe-450 contacts FAD.

Belongs to the class-III pyridine nucleotide-disulfide oxidoreductase family. The cofactor is FAD.

The enzyme catalyses 2 NADH + O2 + 2 H(+) = 2 NAD(+) + 2 H2O. Its function is as follows. Catalyzes the four-electron reduction of molecular oxygen to water. This Mycoplasma pneumoniae (strain ATCC 29342 / M129 / Subtype 1) (Mycoplasmoides pneumoniae) protein is NADH oxidase (nox).